The chain runs to 298 residues: Probable 3-mercaptopyruvate sulfurtransferase (298 aa).

The Rhodanese 1 domain maps to 24-141 (NAQKTVLLDA…WKTEGLELET (118 aa)). The tract at residues 142 to 175 (GEPRTPKPVVYEGAKLNKDLVASFDDIVKVIESP) is hinge. A Phosphoserine modification is found at Ser-164. The 117-residue stretch at 176 to 292 (DAAGVHIVDA…YGKRANEDSS (117 aa)) folds into the Rhodanese 2 domain. Residue Arg-190 participates in substrate binding. Residue Cys-252 is the Cysteine persulfide intermediate of the active site.

It localises to the mitochondrion. It carries out the reaction 2-oxo-3-sulfanylpropanoate + [thioredoxin]-dithiol = [thioredoxin]-disulfide + hydrogen sulfide + pyruvate + H(+). Its function is as follows. Required for formation of the 2-thio group of the 5-methoxycarbonylmethyl-2-thiouridine modified base in some tRNAs. This is Probable 3-mercaptopyruvate sulfurtransferase (tum1) from Schizosaccharomyces pombe (strain 972 / ATCC 24843) (Fission yeast).